We begin with the raw amino-acid sequence, 310 residues long: MENITEVTEFILMGFTDNADLEILSFFLFLAIYLFTLMGNLGLITLVIGDSRLHNPMYYFLSVLSSVDACYSTVITPQMVVDFVSEKKVISFIGCATQMFLAVTFGTTECFLLAAMAYDRYVAIHNPLMYVVSMSPRVYVPLIIASYAGGILHAVIHTVATFRLSFCGSNKISHIFCDIPPLLAISCSDTHFNQLLLFYCAGFIEVVTILIVLLSYGFILSVILKTRSTEGKRKVFSTCGSHLMAVSTFHGTVLFMYVRPSDSYALEHDMMVSIFYSIVIPMLNPLIYSLRNKDVKEAIKKVFGKRILCG.

Residues 1-23 (MENITEVTEFILMGFTDNADLEI) are Extracellular-facing. A glycan (N-linked (GlcNAc...) asparagine) is linked at Asn-3. Residues 24–44 (LSFFLFLAIYLFTLMGNLGLI) form a helical membrane-spanning segment. Residues 45–52 (TLVIGDSR) lie on the Cytoplasmic side of the membrane. A helical membrane pass occupies residues 53-73 (LHNPMYYFLSVLSSVDACYST). Over 74-97 (VITPQMVVDFVSEKKVISFIGCAT) the chain is Extracellular. Cysteines 95 and 187 form a disulfide. A helical transmembrane segment spans residues 98 to 118 (QMFLAVTFGTTECFLLAAMAY). At 119-131 (DRYVAIHNPLMYV) the chain is on the cytoplasmic side. A helical membrane pass occupies residues 132–152 (VSMSPRVYVPLIIASYAGGIL). The Extracellular segment spans residues 153–194 (HAVIHTVATFRLSFCGSNKISHIFCDIPPLLAISCSDTHFNQ). The helical transmembrane segment at 195 to 215 (LLLFYCAGFIEVVTILIVLLS) threads the bilayer. At 216–235 (YGFILSVILKTRSTEGKRKV) the chain is on the cytoplasmic side. Residues 236 to 256 (FSTCGSHLMAVSTFHGTVLFM) traverse the membrane as a helical segment. The Extracellular portion of the chain corresponds to 257–269 (YVRPSDSYALEHD). The chain crosses the membrane as a helical span at residues 270 to 290 (MMVSIFYSIVIPMLNPLIYSL). The Cytoplasmic segment spans residues 291–310 (RNKDVKEAIKKVFGKRILCG).

This sequence belongs to the G-protein coupled receptor 1 family.

Its subcellular location is the cell membrane. Its function is as follows. Potential odorant receptor. This Mus musculus (Mouse) protein is Olfactory receptor 5T7.